Here is a 1137-residue protein sequence, read N- to C-terminus: Phytochrome C (1137 aa).

Low complexity predominate over residues 1–18 (MSSSRSNNRATCSRSSSA). Positions 1–27 (MSSSRSNNRATCSRSSSARSKHSARVV) are disordered. The GAF domain maps to 217–400 (NLSLLCDVLV…VFGIQINKEV (184 aa)). C322 contacts phytochromobilin. PAS domains are found at residues 620 to 690 (VTNE…LQGI) and 750 to 824 (IQGD…TKLS). The region spanning 904–1124 (YIRQELRNPL…IVLVEFPVAQ (221 aa)) is the Histidine kinase domain.

Belongs to the phytochrome family. Homodimer. Post-translationally, contains one covalently linked phytochromobilin chromophore.

Functionally, regulatory photoreceptor which exists in two forms that are reversibly interconvertible by light: the Pr form that absorbs maximally in the red region of the spectrum and the Pfr form that absorbs maximally in the far-red region. Photoconversion of Pr to Pfr induces an array of morphogenic responses, whereas reconversion of Pfr to Pr cancels the induction of those responses. Pfr controls the expression of a number of nuclear genes including those encoding the small subunit of ribulose-bisphosphate carboxylase, chlorophyll A/B binding protein, protochlorophyllide reductase, rRNA, etc. It also controls the expression of its own gene(s) in a negative feedback fashion. The chain is Phytochrome C (PHYC) from Oryza sativa subsp. indica (Rice).